We begin with the raw amino-acid sequence, 422 residues long: S100P-binding protein (422 aa).

3 disordered regions span residues 1–28, 61–135, and 170–292; these read MMCSLVPSEQSSGTSLLPKDNAPFSWSS, LKDD…TPAK, and YVSE…DSGK. A compositionally biased stretch (basic and acidic residues) spans 80-90; the sequence is DDSRNVEKGEK. Position 195 is a phosphoserine (Ser-195). Residues 231–241 show a composition bias toward basic and acidic residues; that stretch reads VSDKNMSDSKK. The segment covering 255–269 has biased composition (polar residues); the sequence is TPNTGSSRRNGSYKS. Residues 274-283 are compositionally biased toward low complexity; sequence KLPVSSSSSK.

In terms of assembly, interacts with S100P.

Its subcellular location is the nucleus. In Bos taurus (Bovine), this protein is S100P-binding protein.